The primary structure comprises 1484 residues: DNA-directed RNA polymerase subunit beta' (1484 aa).

Zn(2+)-binding residues include Cys67, Cys69, Cys82, and Cys85. Residues Asp499, Asp501, and Asp503 each contribute to the Mg(2+) site. 4 residues coordinate Zn(2+): Cys867, Cys943, Cys950, and Cys953.

Belongs to the RNA polymerase beta' chain family. In terms of assembly, the RNAP catalytic core consists of 2 alpha, 1 beta, 1 beta' and 1 omega subunit. When a sigma factor is associated with the core the holoenzyme is formed, which can initiate transcription. Requires Mg(2+) as cofactor. The cofactor is Zn(2+).

It carries out the reaction RNA(n) + a ribonucleoside 5'-triphosphate = RNA(n+1) + diphosphate. Functionally, DNA-dependent RNA polymerase catalyzes the transcription of DNA into RNA using the four ribonucleoside triphosphates as substrates. In Chlorobium phaeovibrioides (strain DSM 265 / 1930) (Prosthecochloris vibrioformis (strain DSM 265)), this protein is DNA-directed RNA polymerase subunit beta'.